Consider the following 151-residue polypeptide: Large ribosomal subunit protein bL9 (151 aa).

It belongs to the bacterial ribosomal protein bL9 family.

In terms of biological role, binds to the 23S rRNA. The sequence is that of Large ribosomal subunit protein bL9 from Dehalococcoides mccartyi (strain ATCC BAA-2266 / KCTC 15142 / 195) (Dehalococcoides ethenogenes (strain 195)).